The following is a 118-amino-acid chain: REPTOR-binding partner (118 aa).

The segment covering M1 to Q20 has biased composition (polar residues). The tract at residues M1–S53 is disordered. The span at T36 to S53 shows a compositional bias: basic and acidic residues. The tract at residues K40–K77 is basic motif. A bZIP domain is found at K40–I90. The leucine-zipper stretch occupies residues L82–L89.

It belongs to the bZIP family. ATF subfamily. As to quaternary structure, homodimer. Interacts (via C-terminus) with REPTOR (via C-terminus).

The protein resides in the nucleus. Its subcellular location is the chromosome. In terms of biological role, transcriptional regulator that acts in the TORC1 signaling pathway to regulate energy homeostasis and promote survival during nutrient deprivation. Interacts with REPTOR to form a transcriptional activator complex that functions downstream of TORC1 to up-regulate the expression of most target genes induced by TORC1 inhibition. In the complex, acts to enhance the binding of the transcriptional activator REPTOR to the regulatory sequences of target genes. Under normal conditions TORC1 is active, inhibiting the formation of the REPTOR/REPTOR-BP complex by phosphorylating REPTOR and mediates its cytoplasmic retention by forming a docking site for 14-3-3 proteins. Upon TORC1 inhibition resulting from nutrient stress, REPTOR is recruited into the nucleus where it interacts with REPTOR-BP and together they maintain organismal metabolism by activating the expression of target stress response genes including those involved in glycogenesis and triglyceride biosynthesis. The complex also appears to negatively regulate some aspects of TORC1-dependent larval growth. This is REPTOR-binding partner from Drosophila melanogaster (Fruit fly).